The following is a 200-amino-acid chain: Glycerol-3-phosphate acyltransferase (200 aa).

Transmembrane regions (helical) follow at residues 2–22 (FNIPAVAVSYLIGSLSFAVIV), 51–71 (KAAALTLLGDAAKGLVAVLLA), 84–104 (AIAAVALAALVGHMWPVFFGF), 114–134 (LGVLLALSPATALVCALIWLV), and 158–178 (LFFMPHTSWIFATLAIAILVL).

The protein belongs to the PlsY family. In terms of assembly, probably interacts with PlsX.

The protein resides in the cell inner membrane. The catalysed reaction is an acyl phosphate + sn-glycerol 3-phosphate = a 1-acyl-sn-glycero-3-phosphate + phosphate. It functions in the pathway lipid metabolism; phospholipid metabolism. Functionally, catalyzes the transfer of an acyl group from acyl-phosphate (acyl-PO(4)) to glycerol-3-phosphate (G3P) to form lysophosphatidic acid (LPA). This enzyme utilizes acyl-phosphate as fatty acyl donor, but not acyl-CoA or acyl-ACP. This Neisseria gonorrhoeae (strain ATCC 700825 / FA 1090) protein is Glycerol-3-phosphate acyltransferase.